An 873-amino-acid polypeptide reads, in one-letter code: MAGVLFANLPCSLQLSPKVPFRQSTNILIPFHKRSSFGFNAQHCVRSHLRLRWNCVGIHASAAETRPDQLPQEERFVSRLNADYHPAVWKDDFIDSLTSPNSHATSKSSVDETINKRIQTLVKEIQCMFQSMGDGETNPSAYDTAWVARIPSIDGSGAPQFPQTLQWILNNQLPDGSWGEECIFLAYDRVLNTLACLLTLKIWNKGDIQVQKGVEFVRKHMEEMKDEADNHRPSGFEVVFPAMLDEAKSLGLDLPYHLPFISQIHQKRQKKLQKIPLNVLHNHQTALLYSLEGLQDVVDWQEITNLQSRDGSFLSSPASTACVFMHTQNKRCLHFLNFVLSKFGDYVPCHYPLDLFERLWAVDTVERLGIDRYFKKEIKESLDYVYRYWDAERGVGWARCNPIPDVDDTAMGLRILRLHGYNVSSDVLENFRDEKGDFFCFAGQTQIGVTDNLNLYRCSQVCFPGEKIMEEAKTFTTNHLQNALAKNNAFDKWAVKKDLPGEVEYAIKYPWHRSMPRLEARSYIEQFGSNDVWLGKTVYKMLYVSNEKYLELAKLDFNMVQALHQKETQHIVSWWRESGFNDLTFTRQRPVEMYFSVAVSMFEPEFAACRIAYAKTSCLAVILDDLYDTHGSLDDLKLFSEAVRRWDISVLDSVRDNQLKVCFLGLYNTVNGFGKDGLKEQGRDVLGYLRKVWEGLLASYTKEAEWSAAKYVPTFNEYVENAKVSIALATVVLNSIFFTGELLPDYILQQVDLRSKFLHLVSLTGRLINDTKTYQAERNRGELVSSVQCYMRENPECTEEEALSHVYGIIDNALKELNWELANPASNAPLCVRRLLFNTARVMQLFYMYRDGFGISDKEMKDHVSRTLFDPVA.

The N-terminal 59 residues, 1–59, are a transit peptide targeting the chloroplast; sequence MAGVLFANLPCSLQLSPKVPFRQSTNILIPFHKRSSFGFNAQHCVRSHLRLRWNCVGIH. K271 serves as a coordination point for substrate. Positions 405 and 407 each coordinate Mg(2+). The DXDD motif motif lies at 405 to 408; the sequence is DVDD. K492 provides a ligand contact to substrate. The Mg(2+) site is built by D624, D628, N769, T773, and E777. The DDXXD motif motif lies at 624–628; the sequence is DDLYD.

This sequence belongs to the terpene synthase family. Tpsd subfamily. The cofactor is Mg(2+). Expressed in roots.

It localises to the plastid. The protein resides in the chloroplast. The catalysed reaction is (2E,6E,10E)-geranylgeranyl diphosphate = (+)-copalyl diphosphate. It carries out the reaction (+)-copalyl diphosphate = abieta-8(14),12-diene + diphosphate. It functions in the pathway terpene metabolism; ginkgolide biosynthesis. Functionally, catalyzes the initial cyclization step in the biosynthesis of ginkgolides, a structurally unique family of diterpenoids that are highly specific platelet-activating-factor receptor antagonists. Bifunctional enzyme that catalyzes two sequential cyclizations of geranylgeranyl diphosphate (GGPP) to levopimaradiene. The polypeptide is Bifunctional levopimaradiene synthase, chloroplastic (LPS) (Ginkgo biloba (Ginkgo)).